Here is an 89-residue protein sequence, read N- to C-terminus: Small ribosomal subunit protein uS15 (89 aa).

Belongs to the universal ribosomal protein uS15 family. Part of the 30S ribosomal subunit. Forms a bridge to the 50S subunit in the 70S ribosome, contacting the 23S rRNA.

In terms of biological role, one of the primary rRNA binding proteins, it binds directly to 16S rRNA where it helps nucleate assembly of the platform of the 30S subunit by binding and bridging several RNA helices of the 16S rRNA. Its function is as follows. Forms an intersubunit bridge (bridge B4) with the 23S rRNA of the 50S subunit in the ribosome. The sequence is that of Small ribosomal subunit protein uS15 from Colwellia psychrerythraea (strain 34H / ATCC BAA-681) (Vibrio psychroerythus).